Consider the following 308-residue polypeptide: Acetyl-coenzyme A carboxylase carboxyl transferase subunit beta (308 aa).

Residues 46-308 (LWVKCPDTGE…LMMGRGLKAA (263 aa)) form the CoA carboxyltransferase N-terminal domain.

It belongs to the AccD/PCCB family. Acetyl-CoA carboxylase is a heterohexamer composed of biotin carboxyl carrier protein (AccB), biotin carboxylase (AccC) and two subunits each of ACCase subunit alpha (AccA) and ACCase subunit beta (AccD).

Its subcellular location is the cytoplasm. The catalysed reaction is N(6)-carboxybiotinyl-L-lysyl-[protein] + acetyl-CoA = N(6)-biotinyl-L-lysyl-[protein] + malonyl-CoA. The protein operates within lipid metabolism; malonyl-CoA biosynthesis; malonyl-CoA from acetyl-CoA: step 1/1. Functionally, component of the acetyl coenzyme A carboxylase (ACC) complex. Biotin carboxylase (BC) catalyzes the carboxylation of biotin on its carrier protein (BCCP) and then the CO(2) group is transferred by the transcarboxylase to acetyl-CoA to form malonyl-CoA. This Caulobacter sp. (strain K31) protein is Acetyl-coenzyme A carboxylase carboxyl transferase subunit beta.